A 104-amino-acid chain; its full sequence is Cell division topological specificity factor (104 aa).

Belongs to the MinE family.

Its function is as follows. Prevents the cell division inhibition by proteins MinC and MinD at internal division sites while permitting inhibition at polar sites. This ensures cell division at the proper site by restricting the formation of a division septum at the midpoint of the long axis of the cell. The sequence is that of Cell division topological specificity factor from Sorangium cellulosum (strain So ce56) (Polyangium cellulosum (strain So ce56)).